The chain runs to 445 residues: tRNA modification GTPase MnmE (445 aa).

3 residues coordinate (6S)-5-formyl-5,6,7,8-tetrahydrofolate: Arg-25, Glu-83, and Lys-121. In terms of domain architecture, TrmE-type G spans 217–371; it reads GVRVVILGPP…LLTLIQEKSR (155 aa). GTP-binding positions include 227-232, 246-252, and 271-274; these read NAGKST, SEHPGTT, and DTAG. Mg(2+)-binding residues include Ser-231 and Thr-252. Lys-445 is a binding site for (6S)-5-formyl-5,6,7,8-tetrahydrofolate.

It belongs to the TRAFAC class TrmE-Era-EngA-EngB-Septin-like GTPase superfamily. TrmE GTPase family. As to quaternary structure, homodimer. Heterotetramer of two MnmE and two MnmG subunits. It depends on K(+) as a cofactor.

The protein localises to the cytoplasm. Exhibits a very high intrinsic GTPase hydrolysis rate. Involved in the addition of a carboxymethylaminomethyl (cmnm) group at the wobble position (U34) of certain tRNAs, forming tRNA-cmnm(5)s(2)U34. The protein is tRNA modification GTPase MnmE of Anaplasma phagocytophilum (strain HZ).